The sequence spans 223 residues: Global nitrogen regulator (223 aa).

Residues 143-216 (RDMGSRLVSF…KKKITVHKPV (74 aa)) enclose the HTH crp-type domain. Positions 176 to 195 (HQAIAEAIGSTRVTVTRLLG) form a DNA-binding region, H-T-H motif.

Its function is as follows. Required for full expression of proteins subject to ammonium repression. Transcriptional activator of genes subject to nitrogen control. In terms of biological role, has affinity for the xisA upstream region. Binds to a 66 bp region containing three repeats of the consensus recognition sequence 5'-ACATT-3'. This chain is Global nitrogen regulator (ntcA), found in Nostoc sp. (strain PCC 7120 / SAG 25.82 / UTEX 2576).